Here is a 287-residue protein sequence, read N- to C-terminus: Coatomer subunit epsilon-1 (287 aa).

This sequence belongs to the COPE family. As to quaternary structure, oligomeric complex that consists of at least the alpha, beta, beta', gamma, delta, epsilon and zeta subunits.

It is found in the cytoplasm. It localises to the golgi apparatus membrane. Its subcellular location is the cytoplasmic vesicle. The protein localises to the COPI-coated vesicle membrane. Functionally, the coatomer is a cytosolic protein complex that binds to dilysine motifs and reversibly associates with Golgi non-clathrin-coated vesicles, which further mediate biosynthetic protein transport from the ER, via the Golgi up to the trans Golgi network. The coatomer complex is required for budding from Golgi membranes, and is essential for the retrograde Golgi-to-ER transport of dilysine-tagged proteins. The chain is Coatomer subunit epsilon-1 (COPE1) from Oryza sativa subsp. japonica (Rice).